Reading from the N-terminus, the 178-residue chain is ATP-dependent protease subunit HslV (178 aa).

Residue Thr5 is part of the active site. Ala160, Cys163, and Thr166 together coordinate Na(+).

It belongs to the peptidase T1B family. HslV subfamily. As to quaternary structure, a double ring-shaped homohexamer of HslV is capped on each side by a ring-shaped HslU homohexamer. The assembly of the HslU/HslV complex is dependent on binding of ATP.

The protein localises to the cytoplasm. It carries out the reaction ATP-dependent cleavage of peptide bonds with broad specificity.. Allosterically activated by HslU binding. Functionally, protease subunit of a proteasome-like degradation complex believed to be a general protein degrading machinery. The polypeptide is ATP-dependent protease subunit HslV (Magnetococcus marinus (strain ATCC BAA-1437 / JCM 17883 / MC-1)).